Reading from the N-terminus, the 293-residue chain is Putative ribose uptake protein RbsU (293 aa).

The next 10 helical transmembrane spans lie at S2–S24, I34–F56, L63–F80, T95–I117, I122–W139, A154–A171, L180–M202, I212–A234, L241–L263, and V273–I292.

Belongs to the GRP transporter (TC 2.A.7.5) family.

The protein localises to the cell membrane. Its function is as follows. Could be involved in the uptake of ribose. This is Putative ribose uptake protein RbsU (rbsU) from Staphylococcus aureus (strain Mu50 / ATCC 700699).